Here is a 297-residue protein sequence, read N- to C-terminus: 4-diphosphocytidyl-2-C-methyl-D-erythritol kinase (297 aa).

Residue Lys-22 is part of the active site. 111–121 (PSQAGMGGGSS) serves as a coordination point for ATP. The active site involves Asp-153.

The protein belongs to the GHMP kinase family. IspE subfamily.

The catalysed reaction is 4-CDP-2-C-methyl-D-erythritol + ATP = 4-CDP-2-C-methyl-D-erythritol 2-phosphate + ADP + H(+). Its pathway is isoprenoid biosynthesis; isopentenyl diphosphate biosynthesis via DXP pathway; isopentenyl diphosphate from 1-deoxy-D-xylulose 5-phosphate: step 3/6. Catalyzes the phosphorylation of the position 2 hydroxy group of 4-diphosphocytidyl-2C-methyl-D-erythritol. In Polaromonas naphthalenivorans (strain CJ2), this protein is 4-diphosphocytidyl-2-C-methyl-D-erythritol kinase.